A 130-amino-acid chain; its full sequence is Protein ApaG (130 aa).

Positions 3–127 (RALTRDIEVT…FSLDSPGLVR (125 aa)) constitute an ApaG domain.

The polypeptide is Protein ApaG (Rhizobium meliloti (strain 1021) (Ensifer meliloti)).